Consider the following 300-residue polypeptide: Probable alpha-L-glutamate ligase (300 aa).

Positions 104-287 (LQLLARQGID…IAGKMISWIE (184 aa)) constitute an ATP-grasp domain. ATP-binding positions include K141, 178 to 179 (EY), D187, and 211 to 213 (RSN). Mg(2+)-binding residues include D248, E260, and N262. 3 residues coordinate Mn(2+): D248, E260, and N262.

Belongs to the RimK family. The cofactor is Mg(2+). Mn(2+) is required as a cofactor.

This Enterobacter sp. (strain 638) protein is Probable alpha-L-glutamate ligase.